The chain runs to 137 residues: Glutamate mutase sigma subunit (137 aa).

Positions 3-137 (KKTIVLGVIG…ADMKEVLGVE (135 aa)) constitute a B12-binding domain. Residues 13-17 (SDCHA), His16, 61-63 (SSL), and 93-97 (NIVVG) contribute to the adenosylcob(III)alamin site.

The protein belongs to the methylaspartate mutase GlmS subunit family. As to quaternary structure, heterotetramer composed of 2 epsilon subunits (GlmE) and 2 sigma subunits (GlmS). GlmE exists as a homodimer and GlmS as a monomer. It depends on adenosylcob(III)alamin as a cofactor.

It carries out the reaction (2S,3S)-3-methyl-L-aspartate = L-glutamate. It functions in the pathway amino-acid degradation; L-glutamate degradation via mesaconate pathway; acetate and pyruvate from L-glutamate: step 1/4. In terms of biological role, catalyzes the carbon skeleton rearrangement of L-glutamate to L-threo-3-methylaspartate ((2S,3S)-3-methylaspartate). The protein is Glutamate mutase sigma subunit of Clostridium tetanomorphum.